A 25-amino-acid polypeptide reads, in one-letter code: Toxin LyeTx 1 (25 aa).

Leucine amide is present on leucine 25.

As to expression, expressed by the venom gland.

It localises to the secreted. Has antimicrobial activity against Gram-positive bacterium S.aureus (MIC=3.79 uM), Gram-negative bacterium E.coli (MIC=7.81 uM) and yeasts C.krusei (MIC=26.3 uM) and C.neoformans (MIC=13.2 uM). Has hemolytic activity against rabbit erythrocytes. Forms pores in lipid bilayers in vitro; pore formation is reduced when cholesterol is present in the bilayers. The sequence is that of Toxin LyeTx 1 from Lycosa erythrognatha (Wolf spider).